The chain runs to 31 residues: GLPTCGETCFGGTCNTPGCTCDSSWPICTHN.

The cyclopeptide (Gly-Asn) cross-link spans 1–31 (GLPTCGETCFGGTCNTPGCTCDSSWPICTHN). Cystine bridges form between Cys5-Cys19, Cys9-Cys21, and Cys14-Cys28.

Post-translationally, this is a cyclic peptide. As to expression, expressed in leaves but not in petals, petioles, roots and runners (at protein level).

In terms of biological role, probably participates in a plant defense mechanism. The polypeptide is Cycloviolacin-O23 (Viola odorata (Sweet violet)).